The primary structure comprises 332 residues: Small ribosomal subunit biogenesis GTPase RsgA (332 aa).

The region spanning 103–259 (RQQLIAANLD…LIDTPGMREL (157 aa)) is the CP-type G domain. GTP-binding positions include 148–151 (TKVD) and 201–209 (GSSGAGKST). Zn(2+) contacts are provided by Cys281, Cys286, His288, and Cys294.

It belongs to the TRAFAC class YlqF/YawG GTPase family. RsgA subfamily. As to quaternary structure, monomer. Associates with 30S ribosomal subunit, binds 16S rRNA. It depends on Zn(2+) as a cofactor.

The protein localises to the cytoplasm. In terms of biological role, one of several proteins that assist in the late maturation steps of the functional core of the 30S ribosomal subunit. Helps release RbfA from mature subunits. May play a role in the assembly of ribosomal proteins into the subunit. Circularly permuted GTPase that catalyzes slow GTP hydrolysis, GTPase activity is stimulated by the 30S ribosomal subunit. The sequence is that of Small ribosomal subunit biogenesis GTPase RsgA from Xylella fastidiosa (strain M12).